Consider the following 225-residue polypeptide: Glutathione S-transferase U2 (225 aa).

A GST N-terminal domain is found at 6 to 85; sequence ESVKLLGFWI…YIDQTWNNNP (80 aa). Glutathione is bound by residues 16–17, 42–43, 56–57, and 69–70; these read SP, KK, KV, and ES. A GST C-terminal domain is found at 90–217; it reads DPYEKAMVRF…EKHIERMKKI (128 aa). Phosphothreonine is present on Thr-151.

This sequence belongs to the GST superfamily. Tau family.

Its subcellular location is the cytoplasm. The protein resides in the cytosol. The catalysed reaction is RX + glutathione = an S-substituted glutathione + a halide anion + H(+). In terms of biological role, may be involved in the conjugation of reduced glutathione to a wide number of exogenous and endogenous hydrophobic electrophiles and have a detoxification role against certain herbicides. This is Glutathione S-transferase U2 (GSTU2) from Arabidopsis thaliana (Mouse-ear cress).